A 95-amino-acid chain; its full sequence is MTTKLSESEIQSALRERSAWTVVNGKLHREYKFADFIHAFGFMTCAALSAEAMNHHPEWFNVYNRLTIDLTTHDAGGITAKDFQLAAKLDALAAG.

It belongs to the pterin-4-alpha-carbinolamine dehydratase family.

The catalysed reaction is (4aS,6R)-4a-hydroxy-L-erythro-5,6,7,8-tetrahydrobiopterin = (6R)-L-erythro-6,7-dihydrobiopterin + H2O. This Solibacter usitatus (strain Ellin6076) protein is Putative pterin-4-alpha-carbinolamine dehydratase.